A 353-amino-acid polypeptide reads, in one-letter code: Mas-related G-protein coupled receptor member B5 (353 aa).

The Extracellular portion of the chain corresponds to 1–67; that stretch reads MPDSPTESYG…SCIITFNTLN (67 aa). N26 and N44 each carry an N-linked (GlcNAc...) asparagine glycan. Residues 68–90 form a helical membrane-spanning segment; that stretch reads FLTATISVVGTAGNATVLRLLGF. Residues 91 to 96 lie on the Cytoplasmic side of the membrane; the sequence is HMHRYA. A helical transmembrane segment spans residues 97–117; that stretch reads FSVYVFNLAGADFLYLCTQTV. Residues 118-131 lie on the Extracellular side of the membrane; sequence YSLECVLQFDNSYF. Residues 132–152 traverse the membrane as a helical segment; the sequence is YFLLTILMFAYLAALCMIPAI. Over 153-180 the chain is Cytoplasmic; it reads STERCLSVTWPIWYHCQRPRHTSATVCA. The chain crosses the membrane as a helical span at residues 181-201; sequence LFWAFSLLLRLLLGQGCGFLF. The Extracellular portion of the chain corresponds to 202-213; that stretch reads GKYDYYFCRYCS. The chain crosses the membrane as a helical span at residues 214–234; it reads FITTAFLIVLFVVPFVSSLAM. Topologically, residues 235–253 are cytoplasmic; it reads LTKIICGSHRIPVTRFYVT. The chain crosses the membrane as a helical span at residues 254 to 274; the sequence is IAVTVLVFTFFGLPVGIISLL. Residues 275–289 are Extracellular-facing; the sequence is LPRIVVFRGVFYIYK. The helical transmembrane segment at 290–310 threads the bilayer; the sequence is IVTFLYSVNCCANPIIYFLIG. At 311 to 353 the chain is on the cytoplasmic side; sequence SIRHHRLQRQSLKLLLQRAMQDTPEEEGGVKGPSQKSNELEIV. Residues 333–353 are disordered; it reads TPEEEGGVKGPSQKSNELEIV.

The protein belongs to the G-protein coupled receptor 1 family. Mas subfamily. In terms of tissue distribution, expressed strongly in newborn dorsal root ganglia, adult dorsal root ganglia and trigeminal ganlia.

It localises to the membrane. Functionally, orphan receptor. Probably involved in the function of nociceptive neurons. May regulate nociceptor function and/or development, including the sensation or modulation of pain. The chain is Mas-related G-protein coupled receptor member B5 (Mrgprb5) from Rattus norvegicus (Rat).